The primary structure comprises 41 residues: Large ribosomal subunit protein bL36B (41 aa).

Belongs to the bacterial ribosomal protein bL36 family.

The polypeptide is Large ribosomal subunit protein bL36B (Haemophilus ducreyi (strain 35000HP / ATCC 700724)).